The sequence spans 423 residues: Serine hydroxymethyltransferase 2 (423 aa).

(6S)-5,6,7,8-tetrahydrofolate is bound by residues Leu-121 and 125 to 127; that span reads GHL. An N6-(pyridoxal phosphate)lysine modification is found at Lys-230. A (6S)-5,6,7,8-tetrahydrofolate-binding site is contributed by 356–358; sequence SPF.

The protein belongs to the SHMT family. As to quaternary structure, homodimer. Pyridoxal 5'-phosphate is required as a cofactor.

Its subcellular location is the cytoplasm. The enzyme catalyses (6R)-5,10-methylene-5,6,7,8-tetrahydrofolate + glycine + H2O = (6S)-5,6,7,8-tetrahydrofolate + L-serine. Its pathway is one-carbon metabolism; tetrahydrofolate interconversion. It participates in amino-acid biosynthesis; glycine biosynthesis; glycine from L-serine: step 1/1. Functionally, catalyzes the reversible interconversion of serine and glycine with tetrahydrofolate (THF) serving as the one-carbon carrier. This reaction serves as the major source of one-carbon groups required for the biosynthesis of purines, thymidylate, methionine, and other important biomolecules. Also exhibits THF-independent aldolase activity toward beta-hydroxyamino acids, producing glycine and aldehydes, via a retro-aldol mechanism. The protein is Serine hydroxymethyltransferase 2 of Pectobacterium atrosepticum (strain SCRI 1043 / ATCC BAA-672) (Erwinia carotovora subsp. atroseptica).